Consider the following 206-residue polypeptide: Small ribosomal subunit protein uS4 (206 aa).

The region spanning 96–157 (SRLDNVVYRM…KAQKQLRVQA (62 aa)) is the S4 RNA-binding domain.

Belongs to the universal ribosomal protein uS4 family. In terms of assembly, part of the 30S ribosomal subunit. Contacts protein S5. The interaction surface between S4 and S5 is involved in control of translational fidelity.

One of the primary rRNA binding proteins, it binds directly to 16S rRNA where it nucleates assembly of the body of the 30S subunit. Functionally, with S5 and S12 plays an important role in translational accuracy. The polypeptide is Small ribosomal subunit protein uS4 (Alkalilimnicola ehrlichii (strain ATCC BAA-1101 / DSM 17681 / MLHE-1)).